The primary structure comprises 375 residues: 23S rRNA (uracil(747)-C(5))-methyltransferase RlmC (375 aa).

[4Fe-4S] cluster is bound by residues Cys-3, Cys-11, Cys-14, and Cys-87. Residues Gln-212, Phe-241, Glu-262, and Asn-307 each contribute to the S-adenosyl-L-methionine site. Residue Cys-334 is the Nucleophile of the active site.

The protein belongs to the class I-like SAM-binding methyltransferase superfamily. RNA M5U methyltransferase family. RlmC subfamily.

It catalyses the reaction uridine(747) in 23S rRNA + S-adenosyl-L-methionine = 5-methyluridine(747) in 23S rRNA + S-adenosyl-L-homocysteine + H(+). Catalyzes the formation of 5-methyl-uridine at position 747 (m5U747) in 23S rRNA. The protein is 23S rRNA (uracil(747)-C(5))-methyltransferase RlmC of Enterobacter sp. (strain 638).